Consider the following 64-residue polypeptide: Large ribosomal subunit protein bL35 (64 aa).

2 stretches are compositionally biased toward basic residues: residues 1-15 (MPKQ…KRFR) and 23-43 (VRQK…RTRR). Positions 1–64 (MPKQKSHSGA…AGRIKRLLAR (64 aa)) are disordered.

Belongs to the bacterial ribosomal protein bL35 family.

This Frankia alni (strain DSM 45986 / CECT 9034 / ACN14a) protein is Large ribosomal subunit protein bL35.